Reading from the N-terminus, the 269-residue chain is Hydroxyethylthiazole kinase (269 aa).

Methionine 48 contributes to the substrate binding site. 2 residues coordinate ATP: lysine 124 and threonine 170. Glycine 197 contributes to the substrate binding site.

This sequence belongs to the Thz kinase family. Mg(2+) is required as a cofactor.

The catalysed reaction is 5-(2-hydroxyethyl)-4-methylthiazole + ATP = 4-methyl-5-(2-phosphooxyethyl)-thiazole + ADP + H(+). It functions in the pathway cofactor biosynthesis; thiamine diphosphate biosynthesis; 4-methyl-5-(2-phosphoethyl)-thiazole from 5-(2-hydroxyethyl)-4-methylthiazole: step 1/1. Functionally, catalyzes the phosphorylation of the hydroxyl group of 4-methyl-5-beta-hydroxyethylthiazole (THZ). This chain is Hydroxyethylthiazole kinase, found in Clostridium kluyveri (strain NBRC 12016).